The following is a 712-amino-acid chain: Lactoperoxidase (712 aa).

The N-terminal stretch at 1–22 (MWVCLQLPVFLASVTLFEVAAS) is a signal peptide. The propeptide occupies 23-100 (DTIAQAASTT…WEESFKRLRR (78 aa)). N-linked (GlcNAc...) (complex) asparagine; alternate glycosylation occurs at Asn-106. The N-linked (GlcNAc...) (hybrid) asparagine; alternate glycan is linked to Asn-106. Cystine bridges form between Cys-123/Cys-284, Cys-132/Cys-145, Cys-246/Cys-256, and Cys-250/Cys-274. A glycan (N-linked (GlcNAc...) (complex) asparagine; alternate) is linked at Asn-212. N-linked (GlcNAc...) (high mannose) asparagine; alternate glycosylation occurs at Asn-212. A heme b-binding site is contributed by Asp-225. Catalysis depends on His-226, which acts as the Proton acceptor. Asp-227 serves as a coordination point for Ca(2+). Positions 301, 303, 305, and 307 each coordinate Ca(2+). Position 315 is a phosphoserine (Ser-315). Asn-322 is a glycosylation site (N-linked (GlcNAc...) (high mannose) asparagine). Cys-354 and Cys-365 are oxidised to a cystine. Asn-358 carries an N-linked (GlcNAc...) asparagine glycan. Residue Glu-375 coordinates heme b. A glycan (N-linked (GlcNAc...) (complex) asparagine; alternate) is linked at Asn-449. A glycan (N-linked (GlcNAc...) (hybrid) asparagine; alternate) is linked at Asn-449. N-linked (GlcNAc...) (high mannose) asparagine; alternate glycosylation is present at Asn-449. His-468 lines the heme b pocket. Tyr-482 is subject to 3'-nitrotyrosine. Disulfide bonds link Cys-573-Cys-630 and Cys-671-Cys-696.

This sequence belongs to the peroxidase family. XPO subfamily. Ca(2+) is required as a cofactor. The cofactor is heme b. As to expression, mammary gland; milk.

The protein localises to the secreted. It is found in the cytoplasm. The catalysed reaction is 2 a phenolic donor + H2O2 = 2 a phenolic radical donor + 2 H2O. It carries out the reaction thiocyanate + H2O2 + H(+) = hypothiocyanous acid + H2O. The enzyme catalyses iodide + H2O2 = hypoiodite + H2O. Heme-containing oxidoreductase which catalyzes the conversion of thiocyanate (SCN(-)) into antimicrobial agent hypothiocyanous acid (OSCN(-)) in the presence of hydrogen peroxide (H2O2). Also involved in the conversion of iodide (I(-)) into hypoiodite (IO(-)) in the presence of H2O2. Responsible for the inactivation of a wide range of micro-organisms and hence, important component of defense mechanism. Shows antibacterial properties against E.coli, K.pneumoniae, P.aeruginosa, S.sonnei, S.saphrophyticus, S.epidermidis and S.dysenteriae. May protect the udder from infection and may promote growth in newborns. May be implicated in airway host defense against infection. May contribute to maintaining an appropriate H2O2 cellular level, therefore protecting cells from H2O2-caused injuries and inflammation. The polypeptide is Lactoperoxidase (Bubalus bubalis (Domestic water buffalo)).